Consider the following 92-residue polypeptide: DNA-directed RNA polymerase subunit Rpo11 (92 aa).

The protein belongs to the archaeal Rpo11/eukaryotic RPB11/RPC19 RNA polymerase subunit family. Part of the RNA polymerase complex.

Its subcellular location is the cytoplasm. The catalysed reaction is RNA(n) + a ribonucleoside 5'-triphosphate = RNA(n+1) + diphosphate. Its function is as follows. DNA-dependent RNA polymerase (RNAP) catalyzes the transcription of DNA into RNA using the four ribonucleoside triphosphates as substrates. This Methanosarcina barkeri (strain Fusaro / DSM 804) protein is DNA-directed RNA polymerase subunit Rpo11.